Consider the following 87-residue polypeptide: A-agglutinin-binding subunit (87 aa).

An N-terminal signal peptide occupies residues 1 to 18 (MQLLRCFSIFSVIASVLA). Thr-22 carries an O-linked (Man...) threonine glycan. Ser-30 carries an O-linked (Man...) serine glycan. Residue Thr-32 is glycosylated (O-linked (Man...) threonine). O-linked (Man...) serine glycosylation occurs at Ser-39. A glycan (O-linked (Man...) threonine) is linked at Thr-63. An O-linked (Man...) serine glycan is attached at Ser-66. Thr-75 carries an O-linked (Man...) threonine glycan.

As to quaternary structure, heterodimer; disulfide-linked. Interacts with SAG1.

Receptor binding subunit of the a-agglutinin heterodimer. S.cerevisiae a and alpha cells express the complementary cell surface glycoproteins a-agglutinin and alpha-agglutinin, respectively, which interact with one another to promote cellular aggregation during mating. This chain is A-agglutinin-binding subunit (AGA2), found in Saccharomyces cerevisiae (strain ATCC 204508 / S288c) (Baker's yeast).